We begin with the raw amino-acid sequence, 167 residues long: Elafin (167 aa).

Positions 1 to 21 (MRSRSFLVLVVVFLICGTLVA) are cleaved as a signal peptide. A propeptide spanning residues 22–70 (QAAGRIRRPKGKGTKKILALVKGQGPVRGKDQVKGQGPVKGQDLGKSQD) is cleaved from the precursor. 12 repeat units span residues 44–49 (GQGPVR), 50–55 (GKDQVK), 56–61 (GQGPVK), 62–67 (GQDLGK), 68–73 (SQDPVK), 74–79 (AQLPDK), 80–85 (GQDLGK), 86–91 (GEDSVK), 92–97 (GQDPFK), 98–103 (AQLPDK), 104–109 (LQDPVK), and 110–115 (AQPAIK). Residues 44–115 (GQGPVRGKDQ…DPVKAQPAIK (72 aa)) are 12 X 6 AA tandem repeats of [GSAL]-[QEK]-[DGLP]-[APSLQ]-[VGDFI]-[KR]. The disordered stretch occupies residues 46 to 104 (GPVRGKDQVKGQGPVKGQDLGKSQDPVKAQLPDKGQDLGKGEDSVKGQDPFKAQLPDKL). The segment at 78-126 (DKGQDLGKGEDSVKGQDPFKAQLPDKLQDPVKAQPAIKRLILLTKPGSC) is 2 X tandem repeats of SVP-1 like motif. Residues 79–91 (KGQDLGKGEDSVK) show a composition bias toward basic and acidic residues. SVP-1 clotting repeat units follow at residues 80–101 (GQDLGKGEDSVKGQDPFKAQLP) and 104–126 (LQDPVKAQPAIKRLILLTKPGSC). The WAP domain maps to 119–167 (LLTKPGSCPRILIRCLMVNPPNRCLSDAQCPGLKKCCEGFCGKACMDPK). 4 disulfides stabilise this stretch: Cys-126–Cys-155, Cys-133–Cys-159, Cys-142–Cys-154, and Cys-148–Cys-163.

In terms of tissue distribution, trachea and large intestine.

In terms of biological role, neutrophil and pancreatic elastase-specific inhibitor of skin. It may prevent elastase-mediated tissue proteolysis. The protein is Elafin of Sus scrofa (Pig).